The following is a 224-amino-acid chain: Attacin-A (224 aa).

An N-terminal signal peptide occupies residues methionine 1–alanine 20. Positions leucine 21–arginine 34 are excised as a propeptide.

It belongs to the attacin/sarcotoxin-2 family. Hemolymph (at protein level).

The protein localises to the secreted. Functionally, hemolymph antibacterial protein. The protein is Attacin-A (AttA) of Drosophila melanogaster (Fruit fly).